The chain runs to 150 residues: Cilia- and flagella-associated protein 68 (150 aa).

2 mn regions span residues 99 to 110 (TTYDTSYNNKMP) and 140 to 150 (KSTYMNSYSKP).

The protein belongs to the CFAP68 family. As to quaternary structure, microtubule inner protein component of sperm flagellar doublet microtubules.

It localises to the cytoplasm. Its subcellular location is the cytoskeleton. The protein localises to the cilium axoneme. The protein resides in the flagellum axoneme. It is found in the nucleus. It localises to the cell projection. Its subcellular location is the cilium. In terms of biological role, microtubule inner protein (MIP) part of the dynein-decorated doublet microtubules (DMTs) in cilia axoneme, which is required for motile cilia beating. The sequence is that of Cilia- and flagella-associated protein 68 from Homo sapiens (Human).